The primary structure comprises 426 residues: Gamma-glutamyl phosphate reductase (426 aa).

The protein belongs to the gamma-glutamyl phosphate reductase family.

It localises to the cytoplasm. The enzyme catalyses L-glutamate 5-semialdehyde + phosphate + NADP(+) = L-glutamyl 5-phosphate + NADPH + H(+). The protein operates within amino-acid biosynthesis; L-proline biosynthesis; L-glutamate 5-semialdehyde from L-glutamate: step 2/2. In terms of biological role, catalyzes the NADPH-dependent reduction of L-glutamate 5-phosphate into L-glutamate 5-semialdehyde and phosphate. The product spontaneously undergoes cyclization to form 1-pyrroline-5-carboxylate. This Ralstonia pickettii (strain 12J) protein is Gamma-glutamyl phosphate reductase.